A 291-amino-acid chain; its full sequence is Phosphate import ATP-binding protein PstB (291 aa).

Residues 1-17 are compositionally biased toward basic and acidic residues; sequence MANTNVKEKELAKHTDQ. Residues 1-40 form a disordered region; that stretch reads MANTNVKEKELAKHTDQSQESISTVVSSNEVKHNKESDSN. Residues 18–29 are compositionally biased toward polar residues; that stretch reads SQESISTVVSSN. Residues 30–40 are compositionally biased toward basic and acidic residues; sequence EVKHNKESDSN. The 242-residue stretch at 45–286 folds into the ABC transporter domain; it reads YSTQNLDLWY…PSDKQTEDYI (242 aa). An ATP-binding site is contributed by 77–84; it reads GPSGCGKS.

This sequence belongs to the ABC transporter superfamily. Phosphate importer (TC 3.A.1.7) family. The complex is composed of two ATP-binding proteins (PstB), two transmembrane proteins (PstC and PstA) and a solute-binding protein (PstS).

The protein resides in the cell membrane. The catalysed reaction is phosphate(out) + ATP + H2O = ADP + 2 phosphate(in) + H(+). Functionally, part of the ABC transporter complex PstSACB involved in phosphate import. Responsible for energy coupling to the transport system. The polypeptide is Phosphate import ATP-binding protein PstB (Staphylococcus haemolyticus (strain JCSC1435)).